Here is a 214-residue protein sequence, read N- to C-terminus: Protein OPG176 (214 aa).

The protein belongs to the orthopoxvirus OPG176 family. As to quaternary structure, tetramer. Interacts with host MYD88, TRF4, TICAM2 and MAL.

BCL2-like protein which disrupts the host immune response by inhibiting the TLR4 signaling pathway leading to NF-kappa-B activation. Acts close to the plasma membrane and targets several host TIR-domain containing adapter proteins including MYD88, TIRAP, TRIF and TICAM2. In turn, blocks the host NF-kappa-B and TRIF-mediated IRF3 activation. The polypeptide is Protein OPG176 (OPG176) (Homo sapiens (Human)).